The following is a 113-amino-acid chain: Nucleoid-associated protein EUBREC_0329 (113 aa).

Residues 1-12 are compositionally biased toward gly residues; sequence MARRGGFPGGMP. The interval 1 to 45 is disordered; it reads MARRGGFPGGMPGNMNNLMKQAQKMQRQMEEAQKQLEDAEVTAKA. The span at 27 to 37 shows a compositional bias: basic and acidic residues; it reads RQMEEAQKQLE.

It belongs to the YbaB/EbfC family. In terms of assembly, homodimer.

Its subcellular location is the cytoplasm. The protein resides in the nucleoid. Functionally, binds to DNA and alters its conformation. May be involved in regulation of gene expression, nucleoid organization and DNA protection. The chain is Nucleoid-associated protein EUBREC_0329 from Agathobacter rectalis (strain ATCC 33656 / DSM 3377 / JCM 17463 / KCTC 5835 / VPI 0990) (Eubacterium rectale).